The sequence spans 224 residues: Cytidylate kinase (224 aa).

11–19 contacts ATP; it reads GPAAAGKST.

It belongs to the cytidylate kinase family. Type 1 subfamily.

The protein localises to the cytoplasm. It catalyses the reaction CMP + ATP = CDP + ADP. The enzyme catalyses dCMP + ATP = dCDP + ADP. This chain is Cytidylate kinase, found in Geobacillus thermodenitrificans (strain NG80-2).